Consider the following 416-residue polypeptide: Enolase (416 aa).

Residue Q160 participates in (2R)-2-phosphoglycerate binding. E204 functions as the Proton donor in the catalytic mechanism. D239, E282, and D308 together coordinate Mg(2+). (2R)-2-phosphoglycerate is bound by residues K333, R362, S363, and K384. K333 functions as the Proton acceptor in the catalytic mechanism.

Belongs to the enolase family. The cofactor is Mg(2+).

It localises to the cytoplasm. The protein resides in the secreted. The protein localises to the cell surface. The catalysed reaction is (2R)-2-phosphoglycerate = phosphoenolpyruvate + H2O. It functions in the pathway carbohydrate degradation; glycolysis; pyruvate from D-glyceraldehyde 3-phosphate: step 4/5. Its function is as follows. Catalyzes the reversible conversion of 2-phosphoglycerate (2-PG) into phosphoenolpyruvate (PEP). It is essential for the degradation of carbohydrates via glycolysis. The protein is Enolase of Metallosphaera sedula (strain ATCC 51363 / DSM 5348 / JCM 9185 / NBRC 15509 / TH2).